A 501-amino-acid chain; its full sequence is L-arabinose isomerase (501 aa).

Mn(2+)-binding residues include E306, E333, H350, and H450.

The protein belongs to the arabinose isomerase family. Homohexamer. Mn(2+) serves as cofactor.

The catalysed reaction is beta-L-arabinopyranose = L-ribulose. It functions in the pathway carbohydrate degradation; L-arabinose degradation via L-ribulose; D-xylulose 5-phosphate from L-arabinose (bacterial route): step 1/3. Its function is as follows. Catalyzes the conversion of L-arabinose to L-ribulose. The polypeptide is L-arabinose isomerase (Pectobacterium carotovorum subsp. carotovorum (strain PC1)).